Here is a 331-residue protein sequence, read N- to C-terminus: Tryptophan--tRNA ligase (331 aa).

ATP contacts are provided by residues 10-12 and 18-19; these read QPS and GN. A 'HIGH' region motif is present at residues 11–19; it reads PSGQLTLGN. Residue D133 coordinates L-tryptophan. Residues 145-147, V184, and 193-197 contribute to the ATP site; these read GED and KMSKS. A 'KMSKS' region motif is present at residues 193–197; sequence KMSKS.

This sequence belongs to the class-I aminoacyl-tRNA synthetase family. As to quaternary structure, homodimer.

It localises to the cytoplasm. It carries out the reaction tRNA(Trp) + L-tryptophan + ATP = L-tryptophyl-tRNA(Trp) + AMP + diphosphate + H(+). Functionally, catalyzes the attachment of tryptophan to tRNA(Trp). This is Tryptophan--tRNA ligase from Listeria innocua serovar 6a (strain ATCC BAA-680 / CLIP 11262).